Consider the following 184-residue polypeptide: MDLSSLRPAKGAVKGRKRVGRGPGSGNGTTAGKGNKGQQSRSGYTRPVTEGGQMPMYRRLPKFGFTPPNKKSVACVNLAQIQMWIEKGLVGEEISVLDLKHLCNASNQDYFKILGNGEFESAVTITAHFFSKSAVEKIEKAGGKTVTAYRTLEEASKVNGLPFEEALLTPKAPVLKKKKKSDKS.

The tract at residues 1–62 is disordered; the sequence is MDLSSLRPAK…QMPMYRRLPK (62 aa). A compositionally biased stretch (gly residues) spans 21-35; sequence RGPGSGNGTTAGKGN.

It belongs to the universal ribosomal protein uL15 family. In terms of assembly, part of the 50S ribosomal subunit.

Its function is as follows. Binds to the 23S rRNA. The sequence is that of Large ribosomal subunit protein uL15 from Chlorobaculum parvum (strain DSM 263 / NCIMB 8327) (Chlorobium vibrioforme subsp. thiosulfatophilum).